Reading from the N-terminus, the 445-residue chain is Phosphoglucosamine mutase (445 aa).

Ser-102 (phosphoserine intermediate) is an active-site residue. 4 residues coordinate Mg(2+): Ser-102, Asp-241, Asp-243, and Asp-245. Ser-102 is modified (phosphoserine).

Belongs to the phosphohexose mutase family. Mg(2+) serves as cofactor. Post-translationally, activated by phosphorylation.

The catalysed reaction is alpha-D-glucosamine 1-phosphate = D-glucosamine 6-phosphate. In terms of biological role, catalyzes the conversion of glucosamine-6-phosphate to glucosamine-1-phosphate. The sequence is that of Phosphoglucosamine mutase from Aliivibrio fischeri (strain ATCC 700601 / ES114) (Vibrio fischeri).